A 135-amino-acid polypeptide reads, in one-letter code: Nucleoside diphosphate kinase (135 aa).

K9, F57, R85, T91, R102, and N112 together coordinate ATP. The active-site Pros-phosphohistidine intermediate is the H115.

This sequence belongs to the NDK family. As to quaternary structure, homotetramer. Mg(2+) is required as a cofactor.

The protein localises to the cytoplasm. The catalysed reaction is a 2'-deoxyribonucleoside 5'-diphosphate + ATP = a 2'-deoxyribonucleoside 5'-triphosphate + ADP. It catalyses the reaction a ribonucleoside 5'-diphosphate + ATP = a ribonucleoside 5'-triphosphate + ADP. Its function is as follows. Major role in the synthesis of nucleoside triphosphates other than ATP. The ATP gamma phosphate is transferred to the NDP beta phosphate via a ping-pong mechanism, using a phosphorylated active-site intermediate. The sequence is that of Nucleoside diphosphate kinase from Thermobifida fusca (strain YX).